Consider the following 130-residue polypeptide: Small ribosomal subunit protein uS9 (130 aa).

Belongs to the universal ribosomal protein uS9 family.

This Citrobacter koseri (strain ATCC BAA-895 / CDC 4225-83 / SGSC4696) protein is Small ribosomal subunit protein uS9.